The primary structure comprises 97 residues: Co-chaperonin GroES (97 aa).

This sequence belongs to the GroES chaperonin family. In terms of assembly, heptamer of 7 subunits arranged in a ring. Interacts with the chaperonin GroEL.

It is found in the cytoplasm. In terms of biological role, together with the chaperonin GroEL, plays an essential role in assisting protein folding. The GroEL-GroES system forms a nano-cage that allows encapsulation of the non-native substrate proteins and provides a physical environment optimized to promote and accelerate protein folding. GroES binds to the apical surface of the GroEL ring, thereby capping the opening of the GroEL channel. This Pseudomonas putida (strain W619) protein is Co-chaperonin GroES.